The primary structure comprises 158 residues: UPF0098 protein YbhB (158 aa).

The protein belongs to the UPF0098 family. In terms of assembly, homodimer.

Its subcellular location is the cytoplasm. This Escherichia coli (strain K12) protein is UPF0098 protein YbhB (ybhB).